Consider the following 628-residue polypeptide: U-box domain-containing protein 10 (628 aa).

Positions T242 to E316 constitute a U-box domain. 5 ARM repeats span residues T373 to I413, E415 to L454, D456 to I495, Q497 to S537, and Q539 to K578.

It catalyses the reaction S-ubiquitinyl-[E2 ubiquitin-conjugating enzyme]-L-cysteine + [acceptor protein]-L-lysine = [E2 ubiquitin-conjugating enzyme]-L-cysteine + N(6)-ubiquitinyl-[acceptor protein]-L-lysine.. The protein operates within protein modification; protein ubiquitination. Functionally, functions as an E3 ubiquitin ligase. In Arabidopsis thaliana (Mouse-ear cress), this protein is U-box domain-containing protein 10 (PUB10).